A 476-amino-acid chain; its full sequence is MAQISTTSEHTIQTLERIGAHSHVKGLGLDDQLEPRPSSQGMVGQRAARKAAGLIVKMVQDGRIAGRAILMVGPPSTGKTAIAMGMAQTLGSDVPFTMLSASEVFSLEMSKTEALMQAFRRSIGVRIREEAEVVEGEVVEIQIDRSLTGATKTGKLTIKTTDMETIYELGNKMIDSLQKEKVTAGDVIAIDKASGRITKLGRSFTRARDYDAMGSDTKFVQCPEGELQRRKDVVHTVSLHEIDVINSRTQGFLALFSGDTGEIKPELRDQINIKVGEWREEGKAEIVPGVLFIDEVHMLDIECFSFLNRALESELAPLVIMASNRGICRIRGTRFRSPHGIPIDLLDRVLIISTKPYELADLKQILTIRAAEEEVSLKPEALEVLTRMASETSLRYAINLITTANLAAKRRKADEVEVADVRRVYNLFVDEKRSVQYLKEHAEQFMNESDEYGDIDGLNSGAPIIGRQASAGAVQA.

Residue 72–80 coordinates ATP; it reads VGPPSTGKT.

The protein belongs to the RuvB family. As to quaternary structure, may form heterododecamers with RVB1. Component of the SWR1 chromatin remodeling complex, the INO80 chromatin remodeling complex, and of the R2TP complex.

The protein localises to the nucleus. The enzyme catalyses ATP + H2O = ADP + phosphate + H(+). Its function is as follows. DNA helicase which participates in several chromatin remodeling complexes, including the SWR1 and the INO80 complexes. The SWR1 complex mediates the ATP-dependent exchange of histone H2A for the H2A variant HZT1 leading to transcriptional regulation of selected genes by chromatin remodeling. The INO80 complex remodels chromatin by shifting nucleosomes and is involved in DNA repair. Also involved in pre-rRNA processing. The sequence is that of RuvB-like helicase 2 (RVB2) from Mycosarcoma maydis (Corn smut fungus).